The sequence spans 160 residues: Sec-independent protein translocase protein TatB (160 aa).

The helical transmembrane segment at 1-21 (MFGMGFFEILVVLVVAIIFLG) threads the bilayer. The interval 118-160 (HLNEEVSNEEALNKEVSSDESPKEVQLATDNNTKEHDKEKENV) is disordered. 2 stretches are compositionally biased toward basic and acidic residues: residues 128–140 (ALNK…ESPK) and 149–160 (NTKEHDKEKENV).

It belongs to the TatB family. In terms of assembly, the Tat system comprises two distinct complexes: a TatABC complex, containing multiple copies of TatA, TatB and TatC subunits, and a separate TatA complex, containing only TatA subunits. Substrates initially bind to the TatABC complex, which probably triggers association of the separate TatA complex to form the active translocon.

Its subcellular location is the cell inner membrane. Part of the twin-arginine translocation (Tat) system that transports large folded proteins containing a characteristic twin-arginine motif in their signal peptide across membranes. Together with TatC, TatB is part of a receptor directly interacting with Tat signal peptides. TatB may form an oligomeric binding site that transiently accommodates folded Tat precursor proteins before their translocation. The sequence is that of Sec-independent protein translocase protein TatB from Helicobacter pylori (strain ATCC 700392 / 26695) (Campylobacter pylori).